The chain runs to 340 residues: Heat-inducible transcription repressor HrcA (340 aa).

Belongs to the HrcA family.

In terms of biological role, negative regulator of class I heat shock genes (grpE-dnaK-dnaJ and groELS operons). Prevents heat-shock induction of these operons. This chain is Heat-inducible transcription repressor HrcA, found in Burkholderia thailandensis (strain ATCC 700388 / DSM 13276 / CCUG 48851 / CIP 106301 / E264).